The following is a 68-amino-acid chain: Small ribosomal subunit protein bS18c (68 aa).

This sequence belongs to the bacterial ribosomal protein bS18 family. Part of the 30S ribosomal subunit.

The protein localises to the plastid. The protein resides in the chloroplast. The polypeptide is Small ribosomal subunit protein bS18c (rps18) (Cyanidium caldarium (Red alga)).